The primary structure comprises 251 residues: Aliphatic sulfonates import ATP-binding protein SsuB (251 aa).

The 220-residue stretch at 19–238 (GELRHVDKWY…PGEPGAHTER (220 aa)) folds into the ABC transporter domain. 51 to 58 (GRSGSGKS) contacts ATP.

The protein belongs to the ABC transporter superfamily. Aliphatic sulfonates importer (TC 3.A.1.17.2) family. In terms of assembly, the complex is composed of two ATP-binding proteins (SsuB), two transmembrane proteins (SsuC) and a solute-binding protein (SsuA).

The protein resides in the cell membrane. The enzyme catalyses ATP + H2O + aliphatic sulfonate-[sulfonate-binding protein]Side 1 = ADP + phosphate + aliphatic sulfonateSide 2 + [sulfonate-binding protein]Side 1.. Part of the ABC transporter complex SsuABC involved in aliphatic sulfonates import. Responsible for energy coupling to the transport system. The sequence is that of Aliphatic sulfonates import ATP-binding protein SsuB from Mycobacterium avium (strain 104).